A 745-amino-acid chain; its full sequence is AP-3 complex subunit beta (745 aa).

Serine 638 carries the phosphoserine modification. A disordered region spans residues tyrosine 674–serine 745. Residues glutamate 680–glutamate 718 are compositionally biased toward acidic residues.

Belongs to the adaptor complexes large subunit family. Adaptor protein complex 3 (AP-3) is a heterotetramer composed of 2 large adaptins (apl5 and apl6), a medium adaptin (apm3) and a small adaptin (aps3).

The protein resides in the golgi apparatus. The protein localises to the cytoplasmic vesicle. It localises to the clathrin-coated vesicle membrane. In terms of biological role, adaptins are components of the adaptor complexes which link clathrin to receptors in coated vesicles. Clathrin-associated protein complexes are believed to interact with the cytoplasmic tails of membrane proteins, leading to their selection and concentration. Beta adaptin is a subunit of the plasma membrane adaptor. This chain is AP-3 complex subunit beta (apl6), found in Schizosaccharomyces pombe (strain 972 / ATCC 24843) (Fission yeast).